A 326-amino-acid chain; its full sequence is MPTAPLRITVIGSGVIGLSAAHELAAAGHQVTVAYDQELAECVSSVAAAIWFPYHSENSPAADKLLADSLARFEQLSEHPETGIDLRRGLNVDHLPGADRSWTRIVAGTEEASPADLPDGAHAGVWATVPIITMSTYLGWLRGRVEELGADFAKGTVTDLAQLKGGADLVVLAAGLRGGELLGDDDTVYPIRGQVVRLANTKNLTQWLCDDNYPDGVSYIIPRREDIIVGGTDTANDWNREVEPQTSIDILERAAKLVPELEGLEVLEHKVGLRPARETIRLEHVAGHPLPVIAAYGHGGAGVTLSWGTAQRVAELAAQLAGEPAS.

Gly-14, Val-15, Ile-16, Asp-36, Ser-44, Ala-48, Ala-49, Ile-50, and Val-157 together coordinate FAD. D-proline contacts are provided by Tyr-219 and Arg-274. Residues Tyr-219 and Arg-274 each coordinate D-serine. FAD is bound by residues Arg-274, Gly-299, Gly-300, Gly-302, and Thr-304. A D-proline-binding site is contributed by Gly-300. Gly-300 lines the D-serine pocket.

The protein belongs to the DAMOX/DASOX family. Homodimer. It depends on FAD as a cofactor.

The protein localises to the cytoplasm. It localises to the secreted. It is found in the cell wall. The catalysed reaction is a D-alpha-amino acid + O2 + H2O = a 2-oxocarboxylate + H2O2 + NH4(+). The enzyme catalyses D-phenylalanine + O2 + H2O = 3-phenylpyruvate + H2O2 + NH4(+). It carries out the reaction D-lysine + O2 + H2O = 6-amino-2-oxohexanoate + H2O2 + NH4(+). It catalyses the reaction D-methionine + O2 + H2O = 4-methylsulfanyl-2-oxobutanoate + H2O2 + NH4(+). The catalysed reaction is D-arginine + O2 + H2O = 5-guanidino-2-oxopentanoate + H2O2 + NH4(+). The enzyme catalyses D-ornithine + O2 + H2O = 5-amino-2-oxopentanoate + H2O2 + NH4(+). It carries out the reaction D-leucine + O2 + H2O = 4-methyl-2-oxopentanoate + H2O2 + NH4(+). It catalyses the reaction D-alanine + O2 + H2O = pyruvate + H2O2 + NH4(+). The catalysed reaction is D-valine + O2 + H2O = 3-methyl-2-oxobutanoate + H2O2 + NH4(+). The enzyme catalyses D-histidine + O2 + H2O = 3-(imidazol-5-yl)pyruvate + H2O2 + NH4(+). Its function is as follows. Catalyzes the oxidative deamination of D-amino acids with broad substrate specificity. In Glutamicibacter protophormiae (Brevibacterium protophormiae), this protein is D-amino-acid oxidase.